The primary structure comprises 426 residues: Gamma-glutamyl phosphate reductase (426 aa).

This sequence belongs to the gamma-glutamyl phosphate reductase family.

The protein resides in the cytoplasm. It carries out the reaction L-glutamate 5-semialdehyde + phosphate + NADP(+) = L-glutamyl 5-phosphate + NADPH + H(+). The protein operates within amino-acid biosynthesis; L-proline biosynthesis; L-glutamate 5-semialdehyde from L-glutamate: step 2/2. Its function is as follows. Catalyzes the NADPH-dependent reduction of L-glutamate 5-phosphate into L-glutamate 5-semialdehyde and phosphate. The product spontaneously undergoes cyclization to form 1-pyrroline-5-carboxylate. This Cupriavidus pinatubonensis (strain JMP 134 / LMG 1197) (Cupriavidus necator (strain JMP 134)) protein is Gamma-glutamyl phosphate reductase.